Consider the following 299-residue polypeptide: Protein sprouty homolog 4 (299 aa).

Position 1 is an N-acetylmethionine (M1). Disordered stretches follow at residues N55–A79 and F92–P126. Residues F92–S107 are compositionally biased toward low complexity. At S125 the chain carries Phosphoserine. Residues K166–C273 enclose the SPR domain. The tract at residues V181–F299 is required for interaction with TESK1. Required for colocalization with TESK1 at vesicular spots in the cytoplasm and inhibition of TESK1 kinase activity, resulting in inhibition of cell spreading.

It belongs to the sprouty family. Interacts (via C-terminus) with TESK1 (via both C- and N-termini); the interaction inhibits TESK1 kinase activity. Interacts with RAF1. Interacts with CAV1 (via C-terminus).

The protein localises to the cytoplasm. Its subcellular location is the cell projection. The protein resides in the ruffle membrane. Suppresses the insulin receptor and EGFR-transduced MAPK signaling pathway, but does not inhibit MAPK activation by a constitutively active mutant Ras. Probably impairs the formation of GTP-Ras. Inhibits Ras-independent, but not Ras-dependent, activation of RAF1. Represses integrin-mediated cell spreading via inhibition of TESK1-mediated phosphorylation of cofilin. The protein is Protein sprouty homolog 4 (SPRY4) of Homo sapiens (Human).